The chain runs to 1149 residues: Potassium channel subfamily U member 1 (1149 aa).

Residues 1–24 lie on the Extracellular side of the membrane; that stretch reads MFQTKLRNESWEDLQKMSCTTEIQ. A helical transmembrane segment spans residues 25–45; sequence VAFILSSFMTFISGLIILLIF. Residues 46–101 are Cytoplasmic-facing; that stretch reads RLIWRTVKKWQIIKGTGIILELFTSGSIRRNHVRSLHFHGRFRDRIEMLLSAQTFV. Residues 102 to 122 form a helical membrane-spanning segment; it reads GQVLVILVFVLSIGSLIIYFI. The Extracellular segment spans residues 123 to 138; it reads NSADPVGSCSSYEDKT. A helical membrane pass occupies residues 139-159; it reads IPVDLVFNAFFSFYFGLRFMA. Residues 160-163 are Cytoplasmic-facing; it reads ADDK. The helical transmembrane segment at 164 to 184 threads the bilayer; that stretch reads IKFWLEMNSIVDIFTIPPTFI. Residues 185–188 lie on the Extracellular side of the membrane; that stretch reads SYYL. A helical; Voltage-sensor transmembrane segment spans residues 189–209; it reads KSNWLGLRFLRALRLLELPRI. Residues 210–226 are Cytoplasmic-facing; that stretch reads LQILRAIKTSNSVKFSK. A helical membrane pass occupies residues 227–247; that stretch reads LLSIVLSTWFTAAGFIHLVEN. The Extracellular segment spans residues 248–259; it reads SGDPWLKGRNSQ. Positions 260 to 282 form an intramembrane region, pore-forming; sequence NISYFDSVYLVMATTSTVGFGDV. A Selectivity for potassium motif is present at residues 276–279; that stretch reads TVGF. Topologically, residues 283–291 are extracellular; that stretch reads VAKTSLGRT. The chain crosses the membrane as a helical span at residues 292–312; the sequence is FIIFFTLGSLILFANYIPEMV. Topologically, residues 313-1149 are cytoplasmic; sequence ELFANKRKYT…EDPFAYSEPL (837 aa). RCK N-terminal domains follow at residues 331 to 473 and 713 to 884; these read KKFI…DNII and RNHI…EGSL. Low complexity predominate over residues 829–845; sequence IDSSSDSSPSVSEETAS. 2 disordered regions span residues 829 to 851 and 1106 to 1149; these read IDSSSDSSPSVSEETASCTNGHN and ARNQ…SEPL. A compositionally biased stretch (polar residues) spans 1106–1120; sequence ARNQIRTNSSITSQK.

This sequence belongs to the potassium channel family. Calcium-activated (TC 1.A.1.3) subfamily. KCa5.1/KCNU1 sub-subfamily. In terms of assembly, homotetramer; which constitutes the calcium-activated potassium channel. Interacts with LRRC52; this interaction changes some channel gating properties, such as shifting gating to more negative potentials at a given pH. In terms of tissue distribution, testis-specific.

The protein resides in the cell membrane. It localises to the cell projection. Its subcellular location is the cilium. The protein localises to the flagellum membrane. The enzyme catalyses K(+)(in) = K(+)(out). Its activity is regulated as follows. Regulated by changes in cytosolic pH; activated by alkalization. VU0546110 acts as a selective inhibitor. The auxiliary subunit LRRC52 shifts the activation of KCNU1 to more negative potentials at a given pH. Functionally, testis-specific potassium channel activated by both intracellular pH and membrane voltage that mediates export of K(+). Represents the primary spermatozoan K(+) current. The channel underlies a pH-triggered membrane hyperpolarization during the process of sperm capacitation, as sperm encounter the alkaline environment near the ovum in the female reproductive tract, thereby playing an essential for male fertility. This chain is Potassium channel subfamily U member 1 (KCNU1), found in Macaca fascicularis (Crab-eating macaque).